Consider the following 308-residue polypeptide: Malonate utilization transcriptional regulator (308 aa).

An HTH lysR-type domain is found at 9 to 66; that stretch reads ITFRKLSVFMMFMAKGNIARTAEAMKLSSVSVHRALHTLEEGVGCPLFVHKGRNLLPL. Residues 26–45 constitute a DNA-binding region (H-T-H motif); the sequence is IARTAEAMKLSSVSVHRALH.

It belongs to the LysR transcriptional regulatory family.

Its function is as follows. Transcriptional regulator of the mau genes for malonate utilization. The protein is Malonate utilization transcriptional regulator (mauR) of Klebsiella pneumoniae.